Reading from the N-terminus, the 570-residue chain is Methionine--tRNA ligase (570 aa).

Positions 11 to 21 match the 'HIGH' region motif; it reads PYVQTVPHLGN. Residues cysteine 143, cysteine 146, cysteine 156, and cysteine 159 each coordinate Zn(2+). Residues 333–337 carry the 'KMSKS' region motif; it reads KFSKS. ATP is bound at residue lysine 336.

Belongs to the class-I aminoacyl-tRNA synthetase family. MetG type 1 subfamily. Requires Zn(2+) as cofactor.

Its subcellular location is the cytoplasm. It carries out the reaction tRNA(Met) + L-methionine + ATP = L-methionyl-tRNA(Met) + AMP + diphosphate. Is required not only for elongation of protein synthesis but also for the initiation of all mRNA translation through initiator tRNA(fMet) aminoacylation. The sequence is that of Methionine--tRNA ligase from Pyrobaculum aerophilum (strain ATCC 51768 / DSM 7523 / JCM 9630 / CIP 104966 / NBRC 100827 / IM2).